Reading from the N-terminus, the 526-residue chain is Cytochrome P450 4F5 (526 aa).

Position 470 (cysteine 470) interacts with heme.

This sequence belongs to the cytochrome P450 family. Requires heme as cofactor. High expression in liver and kidney. Lower expression in brain.

It localises to the endoplasmic reticulum membrane. Its subcellular location is the microsome membrane. The catalysed reaction is an organic molecule + reduced [NADPH--hemoprotein reductase] + O2 = an alcohol + oxidized [NADPH--hemoprotein reductase] + H2O + H(+). The protein is Cytochrome P450 4F5 (Cyp4f5) of Rattus norvegicus (Rat).